Here is a 416-residue protein sequence, read N- to C-terminus: 2-aminoadipate transaminase (416 aa).

Pyridoxal 5'-phosphate-binding positions include 102 to 103 (GA) and Gln233. An N6-(pyridoxal phosphate)lysine modification is found at Lys259. Thr288 is a pyridoxal 5'-phosphate binding site.

Belongs to the class-III pyridoxal-phosphate-dependent aminotransferase family. Pyridoxal 5'-phosphate is required as a cofactor.

The catalysed reaction is L-2-aminoadipate + 2-oxoglutarate = 2-oxoadipate + L-glutamate. It carries out the reaction 5-aminopentanoate + 2-oxoglutarate = 5-oxopentanoate + L-glutamate. Its pathway is amino-acid degradation. Its function is as follows. Catalyzes the conversion of 2-aminoadipate (2AA) to 2-oxoadipate (2OA). Is most active on L-2-aminoadipate (L-2AA) and shows only weak activity on the enantiomer, D-2-aminoadipate (D-2AA). Shows moderate activity on 5-aminovalerate (5AVA) and weak activity toward 4-aminobutyrate (GABA). Is involved in a D-lysine catabolic pathway. This Pseudomonas putida (strain ATCC 47054 / DSM 6125 / CFBP 8728 / NCIMB 11950 / KT2440) protein is 2-aminoadipate transaminase.